A 231-amino-acid chain; its full sequence is Casparian strip membrane protein 1 (231 aa).

Residues Met-1 to Cys-69 lie on the Cytoplasmic side of the membrane. A helical transmembrane segment spans residues Leu-70–Ile-90. The Extracellular portion of the chain corresponds to Ala-91–Ala-117. A helical transmembrane segment spans residues Phe-118–Phe-138. Residues Ser-139 to Arg-152 are Cytoplasmic-facing. Residues Leu-153–Ala-173 traverse the membrane as a helical segment. Over Ala-174 to Val-207 the chain is Extracellular. The chain crosses the membrane as a helical span at residues Val-208–Ile-228. The Cytoplasmic portion of the chain corresponds to Arg-229–Arg-231.

This sequence belongs to the Casparian strip membrane proteins (CASP) family. Homodimer and heterodimers.

The protein localises to the cell membrane. In terms of biological role, regulates membrane-cell wall junctions and localized cell wall deposition. Required for establishment of the Casparian strip membrane domain (CSD) and the subsequent formation of Casparian strips, a cell wall modification of the root endodermis that determines an apoplastic barrier between the intraorganismal apoplasm and the extraorganismal apoplasm and prevents lateral diffusion. The protein is Casparian strip membrane protein 1 of Brachypodium distachyon (Purple false brome).